Here is a 724-residue protein sequence, read N- to C-terminus: Small conductance calcium-activated potassium channel protein 3 (724 aa).

Residues 1–11 (MDTSGHFHDSG) are compositionally biased toward basic and acidic residues. 2 disordered regions span residues 1–161 (MDTS…RDSN) and 232–251 (ATHNHQHAGTTASSTTFPKA). Positions 34–58 (QPPPPPPPPAPPAAPQQPPGPPLQP) are enriched in pro residues. Over residues 59–88 (QPLQLQQQQQQQQQQPPHPLSQLAQLQSQP) the composition is skewed to low complexity. Polar residues predominate over residues 105 to 125 (PSSNSTAILHPSSRQGSQLNL). The segment covering 131–140 (GHSPSSTATS) has biased composition (low complexity). Position 160 is a phosphoserine (Ser-160). A compositionally biased stretch (polar residues) spans 232 to 249 (ATHNHQHAGTTASSTTFP). Residues 281 to 301 (LIFGMFGIVVMVIETELSWGL) form a helical membrane-spanning segment. A helical membrane pass occupies residues 308-328 (FSLALKCLISLSTIILLGLII). The chain crosses the membrane as a helical span at residues 359–379 (ISLEMLVCAIHPIPGEYKFFW). A helical transmembrane segment spans residues 398-418 (IILSIPMFLRLYLIARVMLLH). A helical membrane pass occupies residues 447–467 (LMTICPGTVLLVFSISLWIIA). The segment at residues 487–507 (FLGAMWLISITFLSIGYGDMV) is an intramembrane region (pore-forming). Residues 516-536 (VCLLTGIMGAGCTALVVAVVA) form a helical membrane-spanning segment. The segment at 554-630 (DTQLTKRIKN…LVDLSKMQNV (77 aa)) is calmodulin-binding. The stretch at 635 to 662 (ITELNDRSEDLEKQIGSLESKLEHLTAS) forms a coiled coil. Positions 702 to 724 (LSDSPIGVSSTSFPTPYTSSSSC) are disordered. Residues 710 to 724 (SSTSFPTPYTSSSSC) are compositionally biased toward low complexity.

This sequence belongs to the potassium channel KCNN family. KCa2.3/KCNN3 subfamily. Homodimer. Heteromultimer with KCNN2 or KCNN1; this modulates plasma membrane expression and consequently the small conductance calcium-activated potassium channel activity. The complex is composed of 4 channel subunits each of which binds to a calmodulin subunit which regulates the channel activity through calcium-binding. Interacts with CALM1.

It localises to the cell membrane. The protein resides in the cytoplasm. The protein localises to the myofibril. Its subcellular location is the sarcomere. It is found in the z line. It carries out the reaction K(+)(in) = K(+)(out). With respect to regulation, inhibited by bee venom neurotoxin apamin. Its function is as follows. Small conductance calcium-activated potassium channel that mediates the voltage-independent transmembrane transfer of potassium across the cell membrane through a constitutive interaction with calmodulin which binds the intracellular calcium allowing its opening. The current is characterized by a voltage-independent activation, an intracellular calcium concentration increase-dependent activation and a single-channel conductance of 10 picosiemens. Also presents an inwardly rectifying current, thus reducing its already small outward conductance of potassium ions, which is particularly the case when the membrane potential displays positive values, above + 20 mV. Activation is followed by membrane hyperpolarization. Thought to regulate neuronal excitability by contributing to the slow component of synaptic afterhyperpolarization. The polypeptide is Small conductance calcium-activated potassium channel protein 3 (Sus scrofa (Pig)).